The chain runs to 345 residues: uncharacterized protein (345 aa).

In terms of domain architecture, CNNM transmembrane spans 1-198 (MDVLSAVLLA…LSEGLLDHEE (198 aa)). 2 helical membrane passes run 3-23 (VLSA…FVGA) and 95-115 (VPPA…HVLL). 2 consecutive CBS domains span residues 217–280 (AVPL…PQTV) and 285–342 (VVRP…MRDG). The helical transmembrane segment at 312–332 (LALVTADNGSVVGMVALEDVV) threads the bilayer.

This sequence belongs to the TerC family.

It localises to the cell membrane. This is an uncharacterized protein from Mycobacterium tuberculosis (strain ATCC 25618 / H37Rv).